A 339-amino-acid chain; its full sequence is MQSINQSINQSINQSINQSINQSINQSINQSINQSINQSINQIVGFVKTCYKPEEVFHFLHQHSIPFSSIGGMTNQNVLLNISGVKFVLRIPNAVNLSLINREYEAFNNAQAYRAGLNVETPVLDAKSGVKLTRYLENSNTLSQIQLNEQSCLSQVVNNLYRLHNSEFVFRNVFSVFDEFRQYFSLLENKSAFYQADSRMDKLSAVFWQFEEINKDIILRPCHNDLVPENMLLQDDRLFFIDWEYSGLNDPLFDIATIIEEAHLSKEAADFLLETYCNQTNKYHKTEFQIAHKRLKIHRFCQNVLWFLWTKVKEEHGENFGDYALKRLDAAFKLLEELP.

Repeat copies occupy residues isoleucine 4–serine 7, isoleucine 8–serine 11, isoleucine 12–serine 15, isoleucine 16–serine 19, isoleucine 20–serine 23, isoleucine 24–serine 27, isoleucine 28–serine 31, isoleucine 32–serine 35, and isoleucine 36–serine 39. Residues isoleucine 4–serine 39 are 9 X 4 AA tandem repeats of I-N-Q-S.

Belongs to the peptidase S49 family.

In terms of biological role, mediates phase variation of the LOS 6A2 and 12D9 epitopes. Phase variation of H.influenza LOS epitopes expressed by LicA is determined by a translational switch. The sequence is that of Protein LicA (licA) from Haemophilus influenzae.